The primary structure comprises 203 residues: Ribonuclease HII (203 aa).

Residues 14 to 203 enclose the RNase H type-2 domain; it reads GVIAGVDEVG…ILNSTKRALL (190 aa). Residues aspartate 20, glutamate 21, and aspartate 112 each contribute to the a divalent metal cation site.

The protein belongs to the RNase HII family. Mn(2+) is required as a cofactor. Mg(2+) serves as cofactor.

Its subcellular location is the cytoplasm. The catalysed reaction is Endonucleolytic cleavage to 5'-phosphomonoester.. Functionally, endonuclease that specifically degrades the RNA of RNA-DNA hybrids. The sequence is that of Ribonuclease HII from Wolbachia sp. subsp. Brugia malayi (strain TRS).